A 248-amino-acid chain; its full sequence is Phycocyanobilin:ferredoxin oxidoreductase (248 aa).

Belongs to the HY2 family.

The catalysed reaction is (2R,3Z)-phycocyanobilin + 4 oxidized [2Fe-2S]-[ferredoxin] = biliverdin IXalpha + 4 reduced [2Fe-2S]-[ferredoxin] + 4 H(+). Functionally, catalyzes the four-electron reduction of biliverdin IX-alpha (2-electron reduction at both the A and D rings); the reaction proceeds via an isolatable 2-electron intermediate, 181,182-dihydrobiliverdin. The sequence is that of Phycocyanobilin:ferredoxin oxidoreductase (pcyA) from Synechococcus elongatus (strain ATCC 33912 / PCC 7942 / FACHB-805) (Anacystis nidulans R2).